Consider the following 487-residue polypeptide: 3-octaprenyl-4-hydroxybenzoate carboxy-lyase (487 aa).

Asn172 contributes to the Mn(2+) binding site. Prenylated FMN is bound by residues 175–177, 189–191, and 194–195; these read IYR, RWL, and RG. Glu238 lines the Mn(2+) pocket. The active-site Proton donor is the Asp287.

It belongs to the UbiD family. As to quaternary structure, homohexamer. Requires prenylated FMN as cofactor. Mn(2+) serves as cofactor.

It localises to the cell membrane. The enzyme catalyses a 4-hydroxy-3-(all-trans-polyprenyl)benzoate + H(+) = a 2-(all-trans-polyprenyl)phenol + CO2. Its pathway is cofactor biosynthesis; ubiquinone biosynthesis. In terms of biological role, catalyzes the decarboxylation of 3-octaprenyl-4-hydroxy benzoate to 2-octaprenylphenol, an intermediate step in ubiquinone biosynthesis. The protein is 3-octaprenyl-4-hydroxybenzoate carboxy-lyase of Actinobacillus pleuropneumoniae serotype 7 (strain AP76).